The chain runs to 188 residues: Grand meiotic recombination cluster protein 2 (188 aa).

Polar residues-rich tracts occupy residues 1–13 and 21–31; these read MSDT…QSSE and ERTNSLKSPDV. The segment at 1–31 is disordered; it reads MSDTTEVPRQSSENDQDNNLERTNSLKSPDV.

Probable transcriptional activator involved in meiotic prophase and synaptonemal complex (SC) assembly. This chain is Grand meiotic recombination cluster protein 2 (GMC2), found in Saccharomyces cerevisiae (strain ATCC 204508 / S288c) (Baker's yeast).